A 183-amino-acid polypeptide reads, in one-letter code: Ribosome-binding factor A (183 aa).

Residues 132-183 (PAGEADPYRDNGSVAQSPAPGGLGIRTSDGPEAVEAPLTCGGDTGDDDRPKE) are disordered.

It belongs to the RbfA family. In terms of assembly, monomer. Binds 30S ribosomal subunits, but not 50S ribosomal subunits or 70S ribosomes.

It localises to the cytoplasm. Its function is as follows. One of several proteins that assist in the late maturation steps of the functional core of the 30S ribosomal subunit. Associates with free 30S ribosomal subunits (but not with 30S subunits that are part of 70S ribosomes or polysomes). Required for efficient processing of 16S rRNA. May interact with the 5'-terminal helix region of 16S rRNA. This is Ribosome-binding factor A from Mycobacterium tuberculosis (strain ATCC 25177 / H37Ra).